The sequence spans 133 residues: Small ribosomal subunit protein uS8 (133 aa).

The protein belongs to the universal ribosomal protein uS8 family. Part of the 30S ribosomal subunit. Contacts proteins S5 and S12.

One of the primary rRNA binding proteins, it binds directly to 16S rRNA central domain where it helps coordinate assembly of the platform of the 30S subunit. This chain is Small ribosomal subunit protein uS8, found in Lachnoclostridium phytofermentans (strain ATCC 700394 / DSM 18823 / ISDg) (Clostridium phytofermentans).